Consider the following 1187-residue polypeptide: Protein CHROMATIN REMODELING 8 (1187 aa).

Residues 1–55 (MEEDEDQFLLSSLGVTSANPEDLEQKILDEATKKPDNDEGGSVEEKSTQLEGTNL) form a disordered region. Residues 9–19 (LLSSLGVTSAN) show a composition bias toward polar residues. Residues 23–48 (LEQKILDEATKKPDNDEGGSVEEKST) show a composition bias toward basic and acidic residues. Positions 110-170 (LQHALATDRL…LKRKLKEIRK (61 aa)) form a coiled coil. Positions 162–169 (KRKLKEIR) match the Nuclear localization signal 1 motif. Disordered regions lie at residues 223 to 247 (GFER…DENE) and 273 to 343 (DAED…DGRR). 2 consecutive short sequence motifs (nuclear localization signal) follow at residues 290 to 297 (LRKLYKTP) and 310 to 317 (GKKSKKTR). Positions 305 to 328 (KKRKAGKKSKKTRPLPEKKWRKRI) are enriched in basic residues. The Helicase ATP-binding domain maps to 397-594 (WELHCQRAGG…WSLFDFVFPG (198 aa)). Residue 410–417 (DEMGLGKT) participates in ATP binding. Residues 467–501 (SAQDSGHGKGQGKASESDYDSESSVDSDHEPKSKN) are disordered. Positions 492–501 (DSDHEPKSKN) are enriched in basic and acidic residues. The DEGH box motif lies at 545–548 (DEGH). The Helicase C-terminal domain occupies 730 to 890 (KVVAEVLKVW…RRFFKARDMK (161 aa)). A coiled-coil region spans residues 987 to 1016 (NANDEEEKMRLEHQASQVAQRAAEALRQSR). Polar residues predominate over residues 1050–1059 (VNSRLTQTGD). Residues 1050-1075 (VNSRLTQTGDKPSAIKNGISAGLSSG) are disordered.

This sequence belongs to the SNF2/RAD54 helicase family. Homodimer. Binds DNA.

It localises to the nucleus. Functionally, essential factor involved in transcription-coupled nucleotide excision repair (TCR) which allows RNA polymerase II-blocking lesions to be rapidly removed from the transcribed strand of active genes. Upon DNA-binding, it locally modifies DNA conformation by wrapping the DNA around itself, thereby modifying the interface between stalled RNA polymerase II and DNA. It is required for transcription-coupled repair complex formation. The protein is Protein CHROMATIN REMODELING 8 of Arabidopsis thaliana (Mouse-ear cress).